A 65-amino-acid polypeptide reads, in one-letter code: Ferredoxin-1 (65 aa).

Residues 2 to 30 (AMKIDPELCTSCGDCEPVCPTNAIAPKKG) enclose the 4Fe-4S ferredoxin-type domain. Positions 10, 13, 16, 20, 39, 42, 51, and 55 each coordinate [4Fe-4S] cluster.

[4Fe-4S] cluster is required as a cofactor.

Functionally, ferredoxins are iron-sulfur proteins that transfer electrons in a wide variety of metabolic reactions. This ferredoxin probably participates in nitrogen fixation. This Rhodobacter capsulatus (Rhodopseudomonas capsulata) protein is Ferredoxin-1 (fdxN).